Here is a 203-residue protein sequence, read N- to C-terminus: MTKNQAGVMTSATAGLNLSDSVYERLLRERIIFLGTQVDDDIANKLCAQILLLSAEDPTRDISLYINSPGGSVTAGMAIYDTMQFAECDIRTVGMGLAASMGQFLLTAGTKGKRYALPHARIMMHQPSAGIGGSAADIAIMAEQFAHTKRELNELQALHTGKSVEQVTADADRDRWFTAQEALEYGFIDHVISHANQANGIGG.

S100 serves as the catalytic Nucleophile. H125 is a catalytic residue.

Belongs to the peptidase S14 family. As to quaternary structure, fourteen ClpP subunits assemble into 2 heptameric rings which stack back to back to give a disk-like structure with a central cavity, resembling the structure of eukaryotic proteasomes.

The protein resides in the cytoplasm. The enzyme catalyses Hydrolysis of proteins to small peptides in the presence of ATP and magnesium. alpha-casein is the usual test substrate. In the absence of ATP, only oligopeptides shorter than five residues are hydrolyzed (such as succinyl-Leu-Tyr-|-NHMec, and Leu-Tyr-Leu-|-Tyr-Trp, in which cleavage of the -Tyr-|-Leu- and -Tyr-|-Trp bonds also occurs).. Its function is as follows. Cleaves peptides in various proteins in a process that requires ATP hydrolysis. Has a chymotrypsin-like activity. Plays a major role in the degradation of misfolded proteins. This is ATP-dependent Clp protease proteolytic subunit 2 from Nocardia farcinica (strain IFM 10152).